The chain runs to 155 residues: Endoribonuclease YbeY (155 aa).

Residues His114, His118, and His124 each contribute to the Zn(2+) site.

It belongs to the endoribonuclease YbeY family. Zn(2+) serves as cofactor.

It is found in the cytoplasm. In terms of biological role, single strand-specific metallo-endoribonuclease involved in late-stage 70S ribosome quality control and in maturation of the 3' terminus of the 16S rRNA. The chain is Endoribonuclease YbeY from Baumannia cicadellinicola subsp. Homalodisca coagulata.